The primary structure comprises 562 residues: Arginine--tRNA ligase (562 aa).

The 'HIGH' region motif lies at 136–146 (ANPTGPMHMGN).

It belongs to the class-I aminoacyl-tRNA synthetase family. Monomer.

It is found in the cytoplasm. It catalyses the reaction tRNA(Arg) + L-arginine + ATP = L-arginyl-tRNA(Arg) + AMP + diphosphate. This Caldanaerobacter subterraneus subsp. tengcongensis (strain DSM 15242 / JCM 11007 / NBRC 100824 / MB4) (Thermoanaerobacter tengcongensis) protein is Arginine--tRNA ligase (argS).